A 435-amino-acid polypeptide reads, in one-letter code: NADH-quinone oxidoreductase subunit D (435 aa).

This sequence belongs to the complex I 49 kDa subunit family. As to quaternary structure, NDH-1 is composed of 14 different subunits. Subunits NuoB, C, D, E, F, and G constitute the peripheral sector of the complex.

It is found in the cell inner membrane. It carries out the reaction a quinone + NADH + 5 H(+)(in) = a quinol + NAD(+) + 4 H(+)(out). Functionally, NDH-1 shuttles electrons from NADH, via FMN and iron-sulfur (Fe-S) centers, to quinones in the respiratory chain. The immediate electron acceptor for the enzyme in this species is believed to be ubiquinone. Couples the redox reaction to proton translocation (for every two electrons transferred, four hydrogen ions are translocated across the cytoplasmic membrane), and thus conserves the redox energy in a proton gradient. The polypeptide is NADH-quinone oxidoreductase subunit D (Xylella fastidiosa (strain M23)).